The sequence spans 640 residues: UvrABC system protein C (640 aa).

One can recognise a GIY-YIG domain in the interval 35-113; it reads DAPGVYRMIG…IKQLKPRFNV (79 aa). The UVR domain occupies 223 to 258; sequence RAVMATMAKAMEEAAEELEFERAARLRDRIRALSAV.

It belongs to the UvrC family. Interacts with UvrB in an incision complex.

Its subcellular location is the cytoplasm. The UvrABC repair system catalyzes the recognition and processing of DNA lesions. UvrC both incises the 5' and 3' sides of the lesion. The N-terminal half is responsible for the 3' incision and the C-terminal half is responsible for the 5' incision. The protein is UvrABC system protein C of Caulobacter vibrioides (strain ATCC 19089 / CIP 103742 / CB 15) (Caulobacter crescentus).